The following is a 228-amino-acid chain: Prepilin leader peptidase/N-methyltransferase (228 aa).

The next 6 membrane-spanning stretches (helical) occupy residues 18–38 (LWGSFLFLSGLAFGSFFNVVI), 95–115 (RYPLMELATGALFVLAGYLMA), 116–136 (PGVPLLGGLILLSLLLILAAI), 147–167 (LTLPLMWAGLLFNLSATYVPL), 168–188 (AEAVVGAMAGYLSLWSVYWVF), and 204–224 (LLAALGAWLGWQALPQTLLLA).

This sequence belongs to the peptidase A24 family.

The protein resides in the cell inner membrane. It carries out the reaction Typically cleaves a -Gly-|-Phe- bond to release an N-terminal, basic peptide of 5-8 residues from type IV prepilin, and then N-methylates the new N-terminal amino group, the methyl donor being S-adenosyl-L-methionine.. Its function is as follows. Plays an essential role in type IV pili and type II pseudopili formation by proteolytically removing the leader sequence from substrate proteins and subsequently monomethylating the alpha-amino group of the newly exposed N-terminal phenylalanine. This is Prepilin leader peptidase/N-methyltransferase (pulO) from Klebsiella pneumoniae.